The chain runs to 188 residues: Elongation factor P (188 aa).

The protein belongs to the elongation factor P family.

The protein localises to the cytoplasm. It functions in the pathway protein biosynthesis; polypeptide chain elongation. Functionally, involved in peptide bond synthesis. Stimulates efficient translation and peptide-bond synthesis on native or reconstituted 70S ribosomes in vitro. Probably functions indirectly by altering the affinity of the ribosome for aminoacyl-tRNA, thus increasing their reactivity as acceptors for peptidyl transferase. In Aeromonas salmonicida (strain A449), this protein is Elongation factor P.